We begin with the raw amino-acid sequence, 744 residues long: Probable methylmalonyl-CoA mutase, mitochondrial (744 aa).

Residues 605–737 enclose the B12-binding domain; that stretch reads QPRIMVAKMG…EKLEANLPEA (133 aa). His-618 is an adenosylcob(III)alamin binding site.

The protein belongs to the methylmalonyl-CoA mutase family. In terms of assembly, homodimer. Adenosylcob(III)alamin is required as a cofactor.

The protein resides in the mitochondrion matrix. It catalyses the reaction (R)-methylmalonyl-CoA = succinyl-CoA. Its function is as follows. Involved, in man, in the degradation of several amino acids, odd-chain fatty acids and cholesterol via propionyl-CoA to the tricarboxylic acid cycle. MCM has different functions in other species. The sequence is that of Probable methylmalonyl-CoA mutase, mitochondrial (mmcm-1) from Caenorhabditis elegans.